We begin with the raw amino-acid sequence, 597 residues long: Elongation factor 4 (597 aa).

One can recognise a tr-type G domain in the interval 2–184; that stretch reads DHIRNFSIIA…ALIAKVPPPK (183 aa). Residues 14-19 and 131-134 contribute to the GTP site; these read DHGKST and NKID.

The protein belongs to the TRAFAC class translation factor GTPase superfamily. Classic translation factor GTPase family. LepA subfamily.

The protein localises to the cell inner membrane. It catalyses the reaction GTP + H2O = GDP + phosphate + H(+). Required for accurate and efficient protein synthesis under certain stress conditions. May act as a fidelity factor of the translation reaction, by catalyzing a one-codon backward translocation of tRNAs on improperly translocated ribosomes. Back-translocation proceeds from a post-translocation (POST) complex to a pre-translocation (PRE) complex, thus giving elongation factor G a second chance to translocate the tRNAs correctly. Binds to ribosomes in a GTP-dependent manner. This Burkholderia multivorans (strain ATCC 17616 / 249) protein is Elongation factor 4.